We begin with the raw amino-acid sequence, 132 residues long: Large ribosomal subunit protein uL14 (132 aa).

It belongs to the universal ribosomal protein uL14 family. In terms of assembly, part of the 50S ribosomal subunit. Forms a cluster with proteins L3 and L24e, part of which may contact the 16S rRNA in 2 intersubunit bridges.

Binds to 23S rRNA. Forms part of two intersubunit bridges in the 70S ribosome. The sequence is that of Large ribosomal subunit protein uL14 from Natronomonas pharaonis (strain ATCC 35678 / DSM 2160 / CIP 103997 / JCM 8858 / NBRC 14720 / NCIMB 2260 / Gabara) (Halobacterium pharaonis).